Consider the following 131-residue polypeptide: Hydrophilin PGA14 (131 aa).

Residues 1–18 form the signal peptide; the sequence is MKFTTVATVFAISSLAAA. Composition is skewed to basic and acidic residues over residues 42–59 and 79–96; these read YGRF…ETGT and KESD…RDSK. Residues 42-110 are disordered; it reads YGRFDKTSRS…NSTTSSGNNG (69 aa). N-linked (GlcNAc...) asparagine glycosylation is found at N97 and N101. Positions 97–110 are enriched in low complexity; it reads NASSNSTTSSGNNG. S105 carries the GPI-anchor amidated serine lipid modification. The propeptide at 106 to 131 is removed in mature form; sequence SGNNGVATGVSLGLAGVLAVGAALVI.

Belongs to the PGA14 family. Post-translationally, the GPI-anchor is attached to the protein in the endoplasmic reticulum and serves to target the protein to the cell surface. There, the glucosamine-inositol phospholipid moiety is cleaved off and the GPI-modified mannoprotein is covalently attached via its lipidless GPI glycan remnant to the 1,6-beta-glucan of the outer cell wall layer.

Its subcellular location is the secreted. It is found in the cell wall. It localises to the membrane. Hydrophilin which is essential to overcome the simple stress of the desiccation-rehydration process. This Candida albicans (strain SC5314 / ATCC MYA-2876) (Yeast) protein is Hydrophilin PGA14 (PGA14).